Reading from the N-terminus, the 462-residue chain is Chromosomal replication initiator protein DnaA (462 aa).

The tract at residues 1-84 (MAVSLWQQCI…RFDIGSRPSA (84 aa)) is domain I, interacts with DnaA modulators. A domain II region spans residues 84 to 125 (ARTVQPAPAAPRPTTGHTQTKARVGTAFNIQAEPMANANHRS). The interval 126–342 (NINPTYQFDN…GALNRVIANA (217 aa)) is domain III, AAA+ region. Positions 170, 172, 173, and 174 each coordinate ATP. The segment at 343-462 (NFTGRPITID…YANLIRTLSS (120 aa)) is domain IV, binds dsDNA.

Belongs to the DnaA family. Oligomerizes as a right-handed, spiral filament on DNA at oriC.

Its subcellular location is the cytoplasm. In terms of biological role, plays an essential role in the initiation and regulation of chromosomal replication. ATP-DnaA binds to the origin of replication (oriC) to initiate formation of the DNA replication initiation complex once per cell cycle. Binds the DnaA box (a 9 base pair repeat at the origin) and separates the double-stranded (ds)DNA. Forms a right-handed helical filament on oriC DNA; dsDNA binds to the exterior of the filament while single-stranded (ss)DNA is stabiized in the filament's interior. The ATP-DnaA-oriC complex binds and stabilizes one strand of the AT-rich DNA unwinding element (DUE), permitting loading of DNA polymerase. After initiation quickly degrades to an ADP-DnaA complex that is not apt for DNA replication. Binds acidic phospholipids. This chain is Chromosomal replication initiator protein DnaA, found in Shewanella denitrificans (strain OS217 / ATCC BAA-1090 / DSM 15013).